The sequence spans 378 residues: Probable endopolygalacturonase AFUB_016610 (378 aa).

Positions 1–19 (MLKLMGSLVLLASAAEVIA) are cleaved as a signal peptide. A propeptide spanning residues 20–35 (SPAAEPVAPSTTLEKR) is cleaved from the precursor. C38 and C56 form a disulfide bridge. 3 PbH1 repeats span residues 147 to 169 (TSSSSITDLHILNTPVQAVSING), 170 to 200 (CDGLTITDITIDNSAGDTQGGHNTDAFDIGS), and 201 to 222 (SSNIIISGAKVYNQDDCVAVNS). D215 (proton donor) is an active-site residue. The cysteines at positions 217 and 233 are disulfide-linked. Residue H237 is part of the active site. PbH1 repeat units follow at residues 252–273 (VENVSFTNSQVTNSDNGLRIKA) and 281–303 (IKGVTYSGITLSSIRKYGILIEQ). N-linked (GlcNAc...) asparagine glycosylation is present at N254. The N-linked (GlcNAc...) asparagine glycan is linked to N327. C345 and C350 are joined by a disulfide. The N-linked (GlcNAc...) asparagine glycan is linked to N352. C369 and C378 are disulfide-bonded.

It belongs to the glycosyl hydrolase 28 family.

The protein resides in the secreted. It catalyses the reaction (1,4-alpha-D-galacturonosyl)n+m + H2O = (1,4-alpha-D-galacturonosyl)n + (1,4-alpha-D-galacturonosyl)m.. Functionally, involved in maceration and soft-rotting of plant tissue. Hydrolyzes the 1,4-alpha glycosidic bonds of de-esterified pectate in the smooth region of the plant cell wall. This chain is Probable endopolygalacturonase AFUB_016610, found in Aspergillus fumigatus (strain CBS 144.89 / FGSC A1163 / CEA10) (Neosartorya fumigata).